A 75-amino-acid polypeptide reads, in one-letter code: Protein SlyX homolog (75 aa).

The protein belongs to the SlyX family.

The chain is Protein SlyX homolog from Vibrio campbellii (strain ATCC BAA-1116).